The chain runs to 456 residues: MNSRLQEIRARQTLRRKLLAQQLGAESADSIGAVLNSKDEQREIAETRETSRASYDTSATVSKRKMPEEGEADEEVIEECKDAVEPQKEEENLPYREEIYKDSSTFLKGTQSLNPHNDYCQHFVDTGHRPQNFIRDVGLADRFEEYPKLRELIRLKDELISKSNTPPMYLQADLESFDLRELKSEFDVILLEPPLEEYFRETGIAANEKWWTWEDIMKLDIEGIAGSRAFVFLWCGSGEGLDFGRMCLRKWGFRRSEDICWIKTNKDNPGKTKTLDPKAIFQRTKEHCLMGIKGTVHRSTDGDFIHANVDIDLIITEEPEIGNIEKPVEIFHIIEHFCLGRRRLHLFGRDSTIRPGWLTVGPTLTNSNFNSETYASYFNTPNSPLTGCTEEIERLRPKTPPPKSDRGFGASRGGGRGGPSAGRGERGRERNRGSFRGDRGNFRGRGGPHRGVFAPR.

A compositionally biased stretch (basic and acidic residues) spans 39-51; that stretch reads DEQREIAETRETS. Residues 39–74 form a disordered region; that stretch reads DEQREIAETRETSRASYDTSATVSKRKMPEEGEADE. Residues 52–61 are compositionally biased toward polar residues; that stretch reads RASYDTSATV. 2 interaction with METTL3 regions span residues 135–136 and 237–238; these read RD and SG. The positively charged region required for RNA-binding stretch occupies residues 245–254; sequence RMCLRKWGFR. Interaction with METTL3 stretches follow at residues 255 to 258 and 278 to 287; these read RSED and KAIFQRTKEH. A positively charged region required for RNA-binding region spans residues 297–298; that stretch reads HR. An interaction with METTL3 region spans residues 308-312; the sequence is NVDID. Residues 395-456 form a disordered region; that stretch reads LRPKTPPPKS…GPHRGVFAPR (62 aa). Over residues 410-421 the composition is skewed to gly residues; the sequence is ASRGGGRGGPSA. Basic and acidic residues predominate over residues 423–441; the sequence is RGERGRERNRGSFRGDRGN.

This sequence belongs to the MT-A70-like family. As to quaternary structure, heterodimer; heterodimerizes with mettl3 to form an antiparallel heterodimer that constitutes an active methyltransferase. Component of the WMM complex, a N6-methyltransferase complex composed of a catalytic subcomplex, named MAC, and of an associated subcomplex, named MACOM. The MAC subcomplex is composed of mettl3 and mettl14.

The protein localises to the nucleus. The METTL3-METTL14 heterodimer forms a N6-methyltransferase complex that methylates adenosine residues at the N(6) position of some mRNAs and regulates the circadian clock, differentiation of embryonic stem cells and cortical neurogenesis. In the heterodimer formed with mettl3, mettl14 constitutes the RNA-binding scaffold that recognizes the substrate rather than the catalytic core. N6-methyladenosine (m6A), which takes place at the 5'-[AG]GAC-3' consensus sites of some mRNAs, plays a role in mRNA stability and processing. This is N(6)-adenosine-methyltransferase non-catalytic subunit METTL14 (mettl14) from Xenopus tropicalis (Western clawed frog).